Here is a 33-residue protein sequence, read N- to C-terminus: Antimicrobial peptide MBP-1 (33 aa).

As to expression, predominantly in the embryo portion of the kernel.

The protein resides in the secreted. In terms of biological role, inhibitor of both bacterial and fungal growth in vitro. This Zea mays (Maize) protein is Antimicrobial peptide MBP-1.